The chain runs to 393 residues: NAD(P)H-quinone oxidoreductase subunit H, chloroplastic (393 aa).

The protein belongs to the complex I 49 kDa subunit family. NDH is composed of at least 16 different subunits, 5 of which are encoded in the nucleus.

It localises to the plastid. Its subcellular location is the chloroplast thylakoid membrane. It catalyses the reaction a plastoquinone + NADH + (n+1) H(+)(in) = a plastoquinol + NAD(+) + n H(+)(out). The catalysed reaction is a plastoquinone + NADPH + (n+1) H(+)(in) = a plastoquinol + NADP(+) + n H(+)(out). NDH shuttles electrons from NAD(P)H:plastoquinone, via FMN and iron-sulfur (Fe-S) centers, to quinones in the photosynthetic chain and possibly in a chloroplast respiratory chain. The immediate electron acceptor for the enzyme in this species is believed to be plastoquinone. Couples the redox reaction to proton translocation, and thus conserves the redox energy in a proton gradient. This is NAD(P)H-quinone oxidoreductase subunit H, chloroplastic from Eucalyptus globulus subsp. globulus (Tasmanian blue gum).